Reading from the N-terminus, the 100-residue chain is Noncompact myelin-associated protein (100 aa).

The Extracellular portion of the chain corresponds to 1 to 28; it reads MTTATTLGDAVFSLNMTRGEDALYKSSG. Residues 29-49 traverse the membrane as a helical segment; the sequence is AIVAAIVVVVIIIVTLVLILL. At 50–100 the chain is on the cytoplasmic side; that stretch reads KMYNRRMRTRRELEPKSPKPPVPPALDPSSNGSQQPATVTFDPANVHVETR. The tract at residues 58–100 is disordered; it reads TRRELEPKSPKPPVPPALDPSSNGSQQPATVTFDPANVHVETR.

In terms of processing, glycosylated. Found in the peripheral nervous system (PNS) Schwann cells (at protein level). Expressed in the PNS, primarily limited to Schwann cells.

It localises to the cell membrane. Functionally, plays a role in myelin formation. The chain is Noncompact myelin-associated protein (Ncmap) from Mus musculus (Mouse).